The sequence spans 164 residues: 17.8 kDa class II heat shock protein (164 aa).

Residues 48-164 (DARAMAATPA…KPKTIEVKVA (117 aa)) enclose the sHSP domain.

Belongs to the small heat shock protein (HSP20) family.

The protein resides in the cytoplasm. The protein is 17.8 kDa class II heat shock protein of Zea mays (Maize).